The following is a 151-amino-acid chain: Small ribosomal subunit protein uS11 (151 aa).

Belongs to the universal ribosomal protein uS11 family.

The polypeptide is Small ribosomal subunit protein uS11 (RPS14) (Podocoryna carnea (Hydrozoan)).